Reading from the N-terminus, the 397-residue chain is Purine ribonucleoside efflux pump NepI (397 aa).

Residues 1–21 (MNENIAEKFRADGVARPNWSA) lie on the Cytoplasmic side of the membrane. Residues 22 to 42 (VFAVAFCVACLITVEFLPVSL) form a helical membrane-spanning segment. Residues 43-54 (LTPMAQDLGISE) lie on the Periplasmic side of the membrane. A helical transmembrane segment spans residues 55-75 (GVAGQSVTVTAFVAMFSSLFI). Residues 76–85 (TQIIQATDRR) are Cytoplasmic-facing. Residues 86–106 (YIVILFAVLLTASCLMVSFAN) traverse the membrane as a helical segment. A topological domain (periplasmic) is located at residue serine 107. Residues 108–128 (FTLLLLGRACLGLALGGFWAI) traverse the membrane as a helical segment. Over 129-147 (SASLTMRLVPARTVPKALS) the chain is Cytoplasmic. The helical transmembrane segment at 148–168 (VIFGAVSIALVIAAPLGSFLG) threads the bilayer. The Periplasmic segment spans residues 169–175 (GIIGWRN). The chain crosses the membrane as a helical span at residues 176 to 196 (VFNAAAVMGVLCVIWVVKSLP). Over 197 to 215 (SLPGEPSHQKQNMFSLLQR) the chain is Cytoplasmic. The chain crosses the membrane as a helical span at residues 216 to 236 (PGVMAGMIAIFMSFAGQFAFF). The Periplasmic portion of the chain corresponds to 237–255 (TYIRPVYMNLAGFDVDGLT). The helical transmembrane segment at 256 to 276 (LVLLSFGIASFVGTSFSSYVL) threads the bilayer. Over 277-281 (KRSVK) the chain is Cytoplasmic. Residues 282–302 (LALAGAPLLLALSALTLIVWG) traverse the membrane as a helical segment. Over 303-305 (SDK) the chain is Periplasmic. The chain crosses the membrane as a helical span at residues 306 to 326 (TVAAAIAIIWGLAFALVPVGW). At 327 to 343 (STWITRSLADQAEKAGS) the chain is on the cytoplasmic side. The helical transmembrane segment at 344 to 364 (IQVAVIQLANTCGAAVGGYAL) threads the bilayer. Residues 365–366 (DN) are Periplasmic-facing. The chain crosses the membrane as a helical span at residues 367–387 (FGLLSPLALSGGLMLLTALVV). At 388-397 (AAKVRITPMS) the chain is on the cytoplasmic side.

The protein belongs to the major facilitator superfamily. DHA1 family. NepI (TC 2.A.1.2.26) subfamily.

It localises to the cell inner membrane. The catalysed reaction is inosine(in) + H(+)(out) = inosine(out) + H(+)(in). The enzyme catalyses guanosine(in) + H(+)(out) = guanosine(out) + H(+)(in). In terms of biological role, involved in the efflux of purine ribonucleosides, such as inosine and guanosine. The polypeptide is Purine ribonucleoside efflux pump NepI (Salmonella paratyphi A (strain ATCC 9150 / SARB42)).